A 143-amino-acid chain; its full sequence is Nucleoside diphosphate kinase (143 aa).

Positions 11, 59, 87, 93, 104, and 114 each coordinate ATP. Catalysis depends on His117, which acts as the Pros-phosphohistidine intermediate.

Belongs to the NDK family. Homotetramer. Mg(2+) serves as cofactor.

It localises to the cytoplasm. The catalysed reaction is a 2'-deoxyribonucleoside 5'-diphosphate + ATP = a 2'-deoxyribonucleoside 5'-triphosphate + ADP. It carries out the reaction a ribonucleoside 5'-diphosphate + ATP = a ribonucleoside 5'-triphosphate + ADP. In terms of biological role, major role in the synthesis of nucleoside triphosphates other than ATP. The ATP gamma phosphate is transferred to the NDP beta phosphate via a ping-pong mechanism, using a phosphorylated active-site intermediate. In Acinetobacter baylyi (strain ATCC 33305 / BD413 / ADP1), this protein is Nucleoside diphosphate kinase.